An 844-amino-acid polypeptide reads, in one-letter code: Protein translocase subunit SecA 1 (844 aa).

ATP-binding positions include glutamine 91, 109-113 (GEGKT), and aspartate 498. Positions 793–813 (KSKSFGEAKHVTAEDGKEKAK) are enriched in basic and acidic residues. Residues 793–825 (KSKSFGEAKHVTAEDGKEKAKPQPIVKGDQVGR) are disordered. Zn(2+) contacts are provided by cysteine 829, cysteine 831, cysteine 840, and histidine 841.

The protein belongs to the SecA family. Monomer and homodimer. Part of the essential Sec protein translocation apparatus which comprises SecA, SecYEG and auxiliary proteins SecDF. Other proteins may also be involved. Zn(2+) serves as cofactor.

The protein resides in the cell membrane. The protein localises to the cytoplasm. It carries out the reaction ATP + H2O + cellular proteinSide 1 = ADP + phosphate + cellular proteinSide 2.. Part of the Sec protein translocase complex. Interacts with the SecYEG preprotein conducting channel. Has a central role in coupling the hydrolysis of ATP to the transfer of proteins into and across the cell membrane, serving as an ATP-driven molecular motor driving the stepwise translocation of polypeptide chains across the membrane. This chain is Protein translocase subunit SecA 1, found in Staphylococcus epidermidis (strain ATCC 35984 / DSM 28319 / BCRC 17069 / CCUG 31568 / BM 3577 / RP62A).